A 372-amino-acid polypeptide reads, in one-letter code: Queuine tRNA-ribosyltransferase (372 aa).

Asp89 acts as the Proton acceptor in catalysis. Residues 89-93, Asp161, and Gly232 each bind substrate; that span reads DSGGF. The interval 262–268 is RNA binding; that stretch reads GIGDLPS. The Nucleophile role is filled by Asp281. The segment at 286 to 290 is RNA binding; important for wobble base 34 recognition; it reads TKAAR. Zn(2+) contacts are provided by Cys319, Cys321, Cys324, and His351.

The protein belongs to the queuine tRNA-ribosyltransferase family. As to quaternary structure, homodimer. Within each dimer, one monomer is responsible for RNA recognition and catalysis, while the other monomer binds to the replacement base PreQ1. Zn(2+) serves as cofactor.

It catalyses the reaction 7-aminomethyl-7-carbaguanine + guanosine(34) in tRNA = 7-aminomethyl-7-carbaguanosine(34) in tRNA + guanine. The protein operates within tRNA modification; tRNA-queuosine biosynthesis. Functionally, catalyzes the base-exchange of a guanine (G) residue with the queuine precursor 7-aminomethyl-7-deazaguanine (PreQ1) at position 34 (anticodon wobble position) in tRNAs with GU(N) anticodons (tRNA-Asp, -Asn, -His and -Tyr). Catalysis occurs through a double-displacement mechanism. The nucleophile active site attacks the C1' of nucleotide 34 to detach the guanine base from the RNA, forming a covalent enzyme-RNA intermediate. The proton acceptor active site deprotonates the incoming PreQ1, allowing a nucleophilic attack on the C1' of the ribose to form the product. After dissociation, two additional enzymatic reactions on the tRNA convert PreQ1 to queuine (Q), resulting in the hypermodified nucleoside queuosine (7-(((4,5-cis-dihydroxy-2-cyclopenten-1-yl)amino)methyl)-7-deazaguanosine). This is Queuine tRNA-ribosyltransferase from Chlamydia trachomatis serovar L2 (strain ATCC VR-902B / DSM 19102 / 434/Bu).